Consider the following 163-residue polypeptide: Phosphopantetheine adenylyltransferase (163 aa).

Ser10 is a binding site for substrate. ATP is bound by residues 10–11 (SF) and His18. Substrate contacts are provided by Lys42, Leu74, and Arg88. ATP contacts are provided by residues 89 to 91 (GLR), Glu99, and 124 to 130 (YSFLSSS).

The protein belongs to the bacterial CoaD family. In terms of assembly, homohexamer. The cofactor is Mg(2+).

Its subcellular location is the cytoplasm. It carries out the reaction (R)-4'-phosphopantetheine + ATP + H(+) = 3'-dephospho-CoA + diphosphate. It functions in the pathway cofactor biosynthesis; coenzyme A biosynthesis; CoA from (R)-pantothenate: step 4/5. Reversibly transfers an adenylyl group from ATP to 4'-phosphopantetheine, yielding dephospho-CoA (dPCoA) and pyrophosphate. This is Phosphopantetheine adenylyltransferase from Bacillus cereus (strain G9842).